The following is a 255-amino-acid chain: ParA family protein CT_582 (255 aa).

This sequence belongs to the ParA family.

The sequence is that of ParA family protein CT_582 from Chlamydia trachomatis serovar D (strain ATCC VR-885 / DSM 19411 / UW-3/Cx).